Here is a 504-residue protein sequence, read N- to C-terminus: L-amino-acid oxidase (504 aa).

The first 18 residues, 1-18 (MNVFFMFSLLFLAALGSC), serve as a signal peptide directing secretion. C28 and C191 are disulfide-bonded. Residues 61–62 (MS), 81–82 (EA), R89, and 105–108 (GPMR) contribute to the FAD site. R108 serves as a coordination point for substrate. The N-linked (GlcNAc...) asparagine glycan is linked to N190. Residue H241 participates in substrate binding. V279 serves as a coordination point for FAD. The cysteines at positions 349 and 430 are disulfide-linked. N379 carries N-linked (GlcNAc...) asparagine glycosylation. Residue Y390 coordinates substrate. Residues E475 and 482–487 (GWIDST) contribute to the FAD site. 482-483 (GW) is a substrate binding site.

The protein belongs to the flavin monoamine oxidase family. FIG1 subfamily. As to quaternary structure, homodimer; non-covalently linked. The cofactor is FAD. As to expression, expressed by the venom gland.

The protein resides in the secreted. The enzyme catalyses an L-alpha-amino acid + O2 + H2O = a 2-oxocarboxylate + H2O2 + NH4(+). The catalysed reaction is L-leucine + O2 + H2O = 4-methyl-2-oxopentanoate + H2O2 + NH4(+). Its function is as follows. Catalyzes an oxidative deamination of predominantly hydrophobic and aromatic L-amino acids, thus producing hydrogen peroxide that may contribute to the diverse toxic effects of this enzyme. Shows activity on L-Leu. Exhibits diverse biological activities, such as hemorrhage, hemolysis, edema, antibacterial and antiparasitic activities, as well as regulation of platelet aggregation. Its effect on platelets is controversial, since it either induces aggregation or inhibits agonist-induced aggregation. These different effects are probably due to different experimental conditions. This protein induces apoptosis of cultured HeLa cells. This chain is L-amino-acid oxidase, found in Gloydius halys (Chinese water mocassin).